The sequence spans 517 residues: Maturase K (517 aa).

The protein belongs to the intron maturase 2 family. MatK subfamily.

It localises to the plastid. The protein localises to the chloroplast. Its function is as follows. Usually encoded in the trnK tRNA gene intron. Probably assists in splicing its own and other chloroplast group II introns. In Caryota mitis (Burmese fishtail palm), this protein is Maturase K.